Here is a 634-residue protein sequence, read N- to C-terminus: 1-deoxy-D-xylulose-5-phosphate synthase (634 aa).

Residues His-74 and 115 to 117 (AHS) each bind thiamine diphosphate. Asp-146 contributes to the Mg(2+) binding site. Thiamine diphosphate contacts are provided by residues 147–148 (GA), Asn-176, Tyr-283, and Glu-365. Asn-176 lines the Mg(2+) pocket.

This sequence belongs to the transketolase family. DXPS subfamily. Homodimer. Mg(2+) serves as cofactor. The cofactor is thiamine diphosphate.

The enzyme catalyses D-glyceraldehyde 3-phosphate + pyruvate + H(+) = 1-deoxy-D-xylulose 5-phosphate + CO2. The protein operates within metabolic intermediate biosynthesis; 1-deoxy-D-xylulose 5-phosphate biosynthesis; 1-deoxy-D-xylulose 5-phosphate from D-glyceraldehyde 3-phosphate and pyruvate: step 1/1. In terms of biological role, catalyzes the acyloin condensation reaction between C atoms 2 and 3 of pyruvate and glyceraldehyde 3-phosphate to yield 1-deoxy-D-xylulose-5-phosphate (DXP). The polypeptide is 1-deoxy-D-xylulose-5-phosphate synthase (Burkholderia lata (strain ATCC 17760 / DSM 23089 / LMG 22485 / NCIMB 9086 / R18194 / 383)).